The following is a 316-amino-acid chain: Aspartate carbamoyltransferase catalytic subunit (316 aa).

Residues arginine 66 and threonine 67 each coordinate carbamoyl phosphate. Lysine 94 contributes to the L-aspartate binding site. Carbamoyl phosphate-binding residues include arginine 116, histidine 146, and glutamine 149. Residues arginine 180 and arginine 235 each contribute to the L-aspartate site. The carbamoyl phosphate site is built by glycine 276 and proline 277.

This sequence belongs to the aspartate/ornithine carbamoyltransferase superfamily. ATCase family. In terms of assembly, heterododecamer (2C3:3R2) of six catalytic PyrB chains organized as two trimers (C3), and six regulatory PyrI chains organized as three dimers (R2).

It catalyses the reaction carbamoyl phosphate + L-aspartate = N-carbamoyl-L-aspartate + phosphate + H(+). It functions in the pathway pyrimidine metabolism; UMP biosynthesis via de novo pathway; (S)-dihydroorotate from bicarbonate: step 2/3. Functionally, catalyzes the condensation of carbamoyl phosphate and aspartate to form carbamoyl aspartate and inorganic phosphate, the committed step in the de novo pyrimidine nucleotide biosynthesis pathway. The sequence is that of Aspartate carbamoyltransferase catalytic subunit from Stenotrophomonas maltophilia (strain R551-3).